An 83-amino-acid polypeptide reads, in one-letter code: Phosphoribosylformylglycinamidine synthase subunit PurS (83 aa).

Belongs to the PurS family. In terms of assembly, homodimer. Part of the FGAM synthase complex composed of 1 PurL, 1 PurQ and 2 PurS subunits.

It localises to the cytoplasm. The enzyme catalyses N(2)-formyl-N(1)-(5-phospho-beta-D-ribosyl)glycinamide + L-glutamine + ATP + H2O = 2-formamido-N(1)-(5-O-phospho-beta-D-ribosyl)acetamidine + L-glutamate + ADP + phosphate + H(+). It participates in purine metabolism; IMP biosynthesis via de novo pathway; 5-amino-1-(5-phospho-D-ribosyl)imidazole from N(2)-formyl-N(1)-(5-phospho-D-ribosyl)glycinamide: step 1/2. In terms of biological role, part of the phosphoribosylformylglycinamidine synthase complex involved in the purines biosynthetic pathway. Catalyzes the ATP-dependent conversion of formylglycinamide ribonucleotide (FGAR) and glutamine to yield formylglycinamidine ribonucleotide (FGAM) and glutamate. The FGAM synthase complex is composed of three subunits. PurQ produces an ammonia molecule by converting glutamine to glutamate. PurL transfers the ammonia molecule to FGAR to form FGAM in an ATP-dependent manner. PurS interacts with PurQ and PurL and is thought to assist in the transfer of the ammonia molecule from PurQ to PurL. This is Phosphoribosylformylglycinamidine synthase subunit PurS from Methanocaldococcus jannaschii (strain ATCC 43067 / DSM 2661 / JAL-1 / JCM 10045 / NBRC 100440) (Methanococcus jannaschii).